Here is a 79-residue protein sequence, read N- to C-terminus: Cytochrome b (79 aa).

3 consecutive transmembrane segments (helical) span residues 1 to 7, 31 to 52, and 67 to 79; these read SALFLAM, WLIR…YLHI, and WNIG…LTMA. 2 residues coordinate heme b: His37 and His51.

It belongs to the cytochrome b family. The cytochrome bc1 complex contains 11 subunits: 3 respiratory subunits (MT-CYB, CYC1 and UQCRFS1), 2 core proteins (UQCRC1 and UQCRC2) and 6 low-molecular weight proteins (UQCRH/QCR6, UQCRB/QCR7, UQCRQ/QCR8, UQCR10/QCR9, UQCR11/QCR10 and a cleavage product of UQCRFS1). This cytochrome bc1 complex then forms a dimer. Requires heme b as cofactor.

Its subcellular location is the mitochondrion inner membrane. In terms of biological role, component of the ubiquinol-cytochrome c reductase complex (complex III or cytochrome b-c1 complex) that is part of the mitochondrial respiratory chain. The b-c1 complex mediates electron transfer from ubiquinol to cytochrome c. Contributes to the generation of a proton gradient across the mitochondrial membrane that is then used for ATP synthesis. The sequence is that of Cytochrome b (MT-CYB) from Dipodomys californicus (California kangaroo rat).